The sequence spans 271 residues: MMRIALGIQYDGAAFCGWQSQPHGKTVQDALERSLAEFAQTSLHTTVAGRTDTGVHGLGQVVHFDTDLDRADFSWVRGTNAFLPPTVAVQWAKPMPDTFHARFAAFERTYYYALYVHPVRSPMLAGRAGWVHTPLDVDAMREAAAHLVGEHDFSAFRSSECQAKSPVKHLYQIGIRPDGDFIHFRFRANAFLHHMVRNLMGCLVAVGRGRYPSSWLAEVLESRDRDCAAPTFMPEGLYLAHVGYPAEFAVPPAQLGSVPWSSVWADLDGRT.

Asp52 serves as the catalytic Nucleophile. Tyr110 contributes to the substrate binding site.

This sequence belongs to the tRNA pseudouridine synthase TruA family. As to quaternary structure, homodimer.

The enzyme catalyses uridine(38/39/40) in tRNA = pseudouridine(38/39/40) in tRNA. Its function is as follows. Formation of pseudouridine at positions 38, 39 and 40 in the anticodon stem and loop of transfer RNAs. The polypeptide is tRNA pseudouridine synthase A (Burkholderia mallei (strain NCTC 10247)).